We begin with the raw amino-acid sequence, 167 residues long: Small ribosomal subunit protein uS5 (167 aa).

An S5 DRBM domain is found at 12–75 (LQEKLVAVNR…EKARRNIVSV (64 aa)).

Belongs to the universal ribosomal protein uS5 family. As to quaternary structure, part of the 30S ribosomal subunit. Contacts proteins S4 and S8.

In terms of biological role, with S4 and S12 plays an important role in translational accuracy. Its function is as follows. Located at the back of the 30S subunit body where it stabilizes the conformation of the head with respect to the body. In Shewanella loihica (strain ATCC BAA-1088 / PV-4), this protein is Small ribosomal subunit protein uS5.